The primary structure comprises 375 residues: Fructose-1,6-bisphosphate aldolase/phosphatase (375 aa).

Residue Asp15 is the Proton acceptor; for FBP phosphatase activity of the active site. Mg(2+) contacts are provided by Asp15, His22, Asp56, and Asp57. His22 is a beta-D-fructose 1,6-bisphosphate binding site. His22 is a binding site for dihydroxyacetone phosphate. Residue Tyr94 coordinates beta-D-fructose 1,6-bisphosphate. Gln98 provides a ligand contact to Mg(2+). Gly107 to Asn108 contributes to the beta-D-fructose 1,6-bisphosphate binding site. Asp135 is a Mg(2+) binding site. Lys136 lines the beta-D-fructose 1,6-bisphosphate pocket. A dihydroxyacetone phosphate-binding site is contributed by Lys136. Tyr237 (proton donor/acceptor; for FBP aldolase activity) is an active-site residue. Positions 240, 241, and 242 each coordinate Mg(2+). Residue Lys240 is the Schiff-base intermediate with DHAP; for FBP aldolase activity of the active site. Beta-D-fructose 1,6-bisphosphate is bound by residues Gln250–Ser251, Arg274, Asp295, and Tyr357. Dihydroxyacetone phosphate contacts are provided by Arg274 and Asp295.

It belongs to the FBP aldolase/phosphatase family. As to quaternary structure, homooctamer; dimer of tetramers. Mg(2+) serves as cofactor.

It catalyses the reaction beta-D-fructose 1,6-bisphosphate = D-glyceraldehyde 3-phosphate + dihydroxyacetone phosphate. It carries out the reaction beta-D-fructose 1,6-bisphosphate + H2O = beta-D-fructose 6-phosphate + phosphate. Its pathway is carbohydrate biosynthesis; gluconeogenesis. Its activity is regulated as follows. FBPase activity is inhibited by Ca(2+), ATP, ADP and phosphoenolpyruvate. Its function is as follows. Catalyzes two subsequent steps in gluconeogenesis: the aldol condensation of dihydroxyacetone phosphate (DHAP) and glyceraldehyde-3-phosphate (GA3P) to fructose-1,6-bisphosphate (FBP), and the dephosphorylation of FBP to fructose-6-phosphate (F6P). Can also dephosphorylate, with lower activity, other related substrates including fructose-1-phosphate, fructose-6-phosphate, glucose-1-phosphate, glucose-6-phosphate, glycerol-2-phosphate, phosphoenolpyruvate, 5'-AMP, 6'-ADP and 7'-ATP. The chain is Fructose-1,6-bisphosphate aldolase/phosphatase from Thermococcus onnurineus (strain NA1).